Reading from the N-terminus, the 314-residue chain is Methionyl-tRNA formyltransferase (314 aa).

108–111 serves as a coordination point for (6S)-5,6,7,8-tetrahydrofolate; sequence SLLP.

This sequence belongs to the Fmt family.

It carries out the reaction L-methionyl-tRNA(fMet) + (6R)-10-formyltetrahydrofolate = N-formyl-L-methionyl-tRNA(fMet) + (6S)-5,6,7,8-tetrahydrofolate + H(+). Attaches a formyl group to the free amino group of methionyl-tRNA(fMet). The formyl group appears to play a dual role in the initiator identity of N-formylmethionyl-tRNA by promoting its recognition by IF2 and preventing the misappropriation of this tRNA by the elongation apparatus. The protein is Methionyl-tRNA formyltransferase of Akkermansia muciniphila (strain ATCC BAA-835 / DSM 22959 / JCM 33894 / BCRC 81048 / CCUG 64013 / CIP 107961 / Muc).